The primary structure comprises 121 residues: uncharacterized protein (121 aa).

A helical transmembrane segment spans residues 11–31 (IFQFFVFPFYYFLLIITEIGF).

Its subcellular location is the membrane. This is an uncharacterized protein from Schizosaccharomyces pombe (strain 972 / ATCC 24843) (Fission yeast).